The chain runs to 274 residues: Protein-export membrane protein SecF (274 aa).

The next 6 membrane-spanning stretches (helical) occupy residues 14–34, 121–141, 143–163, 175–197, 217–237, and 247–267; these read LLILTMVFAVICAGSTLALGV, SVKVAVPLALVAVSIVVFAIF, KPLLSAAVLGALALDLVDALG, ASFAGLLMIIGYAVDSNILLSMY, TGITMVATTTAAACALFLLSM, and VVIFGLIADVLNTWIFNAWVI.

Belongs to the SecD/SecF family. SecF subfamily. As to quaternary structure, part of the protein translocation apparatus. Forms a complex with SecD.

Its subcellular location is the cell membrane. In terms of biological role, involved in protein export. The polypeptide is Protein-export membrane protein SecF (Methanopyrus kandleri (strain AV19 / DSM 6324 / JCM 9639 / NBRC 100938)).